Consider the following 507-residue polypeptide: Glycerol kinase (507 aa).

T14 contributes to the ADP binding site. Residues T14, T15, and S16 each coordinate ATP. T14 provides a ligand contact to sn-glycerol 3-phosphate. R18 is an ADP binding site. Residues R84, E85, Y137, and D247 each contribute to the sn-glycerol 3-phosphate site. 5 residues coordinate glycerol: R84, E85, Y137, D247, and Q248. 2 residues coordinate ADP: T269 and G312. ATP contacts are provided by T269, G312, Q316, and G413. G413 and N417 together coordinate ADP.

Belongs to the FGGY kinase family.

The catalysed reaction is glycerol + ATP = sn-glycerol 3-phosphate + ADP + H(+). Its pathway is polyol metabolism; glycerol degradation via glycerol kinase pathway; sn-glycerol 3-phosphate from glycerol: step 1/1. Inhibited by fructose 1,6-bisphosphate (FBP). Functionally, key enzyme in the regulation of glycerol uptake and metabolism. Catalyzes the phosphorylation of glycerol to yield sn-glycerol 3-phosphate. The chain is Glycerol kinase from Psychromonas ingrahamii (strain DSM 17664 / CCUG 51855 / 37).